Here is a 154-residue protein sequence, read N- to C-terminus: Large ribosomal subunit protein uL13 (154 aa).

It belongs to the universal ribosomal protein uL13 family. As to quaternary structure, part of the 50S ribosomal subunit.

This protein is one of the early assembly proteins of the 50S ribosomal subunit, although it is not seen to bind rRNA by itself. It is important during the early stages of 50S assembly. This is Large ribosomal subunit protein uL13 from Agrobacterium fabrum (strain C58 / ATCC 33970) (Agrobacterium tumefaciens (strain C58)).